Consider the following 301-residue polypeptide: MTRCAVVAAVAAVLLVAGAAAAGGGEEEEAPSTCARRGPGFVDALASRCPCIRIEPSPPVEVRGEAIAKELNLRHRGVTYSVLFYAAWCPFSSKFRPIFEALSTMFPQIYHFTVEESSAMPSLFSRYGVRGFPAILLVNETTMVRYWGPKDLSSLVDFYKETTGFDPIAYFDVDHQDSTGDFRPVTPGDRSLRKIAKDEPFVLLAVLFIILKVAAHFVPIVVSHLKTFLVVRVQNLNLGIRRGSSQLLERALNVLDVKRLCSKLRLSNKTRDLRKGASNARAWASSFTSVSLGESSSSRQA.

The N-terminal stretch at 1–21 (MTRCAVVAAVAAVLLVAGAAA) is a signal peptide. A Thioredoxin domain is found at 51-164 (CIRIEPSPPV…LVDFYKETTG (114 aa)). A glycan (N-linked (GlcNAc...) asparagine) is linked at Asn139. A helical membrane pass occupies residues 201–221 (FVLLAVLFIILKVAAHFVPIV). An N-linked (GlcNAc...) asparagine glycan is attached at Asn268.

It localises to the membrane. The chain is 5'-adenylylsulfate reductase-like 5 (APRL5) from Oryza sativa subsp. japonica (Rice).